The chain runs to 308 residues: Porphobilinogen deaminase (308 aa).

The residue at position 240 (cysteine 240) is an S-(dipyrrolylmethanemethyl)cysteine.

The protein belongs to the HMBS family. As to quaternary structure, monomer. It depends on dipyrromethane as a cofactor.

The catalysed reaction is 4 porphobilinogen + H2O = hydroxymethylbilane + 4 NH4(+). It functions in the pathway porphyrin-containing compound metabolism; protoporphyrin-IX biosynthesis; coproporphyrinogen-III from 5-aminolevulinate: step 2/4. In terms of biological role, tetrapolymerization of the monopyrrole PBG into the hydroxymethylbilane pre-uroporphyrinogen in several discrete steps. The protein is Porphobilinogen deaminase of Desulfitobacterium hafniense (strain DSM 10664 / DCB-2).